The following is a 343-amino-acid chain: Twinfilin (343 aa).

ADF-H domains follow at residues 4–139 (QTGI…KHKV) and 177–312 (GINC…EELH). A disordered region spans residues 314 to 343 (RKLNLRPQFSKPKGPPSRGAKRLTKPQAVE).

It belongs to the actin-binding proteins ADF family. Twinfilin subfamily. As to quaternary structure, interacts with G-actin; ADP-actin form.

The protein localises to the cytoplasm. Its subcellular location is the cytoskeleton. It is found in the cell cortex. Actin-binding protein involved in motile and morphological processes. Inhibits actin polymerization, likely by sequestering G-actin. This Anopheles gambiae (African malaria mosquito) protein is Twinfilin (twf).